The chain runs to 86 residues: Large ribosomal subunit protein bL27 (86 aa).

Residues 1–24 form a disordered region; sequence MAHKKGTGSTRNGRDSNSKRLGVK.

Belongs to the bacterial ribosomal protein bL27 family.

This is Large ribosomal subunit protein bL27 from Prochlorococcus marinus (strain MIT 9301).